The primary structure comprises 587 residues: 2-succinyl-5-enolpyruvyl-6-hydroxy-3-cyclohexene-1-carboxylate synthase (587 aa).

Belongs to the TPP enzyme family. MenD subfamily. As to quaternary structure, homodimer. The cofactor is Mg(2+). Mn(2+) serves as cofactor. It depends on thiamine diphosphate as a cofactor.

It carries out the reaction isochorismate + 2-oxoglutarate + H(+) = 5-enolpyruvoyl-6-hydroxy-2-succinyl-cyclohex-3-ene-1-carboxylate + CO2. It participates in quinol/quinone metabolism; 1,4-dihydroxy-2-naphthoate biosynthesis; 1,4-dihydroxy-2-naphthoate from chorismate: step 2/7. The protein operates within cofactor biosynthesis; phylloquinone biosynthesis. Its function is as follows. Catalyzes the thiamine diphosphate-dependent decarboxylation of 2-oxoglutarate and the subsequent addition of the resulting succinic semialdehyde-thiamine pyrophosphate anion to isochorismate to yield 2-succinyl-5-enolpyruvyl-6-hydroxy-3-cyclohexene-1-carboxylate (SEPHCHC). This is 2-succinyl-5-enolpyruvyl-6-hydroxy-3-cyclohexene-1-carboxylate synthase from Prochlorococcus marinus (strain MIT 9215).